Consider the following 363-residue polypeptide: Ferrochelatase (363 aa).

2 residues coordinate Fe cation: H209 and E290.

This sequence belongs to the ferrochelatase family.

It localises to the cytoplasm. It carries out the reaction heme b + 2 H(+) = protoporphyrin IX + Fe(2+). It participates in porphyrin-containing compound metabolism; protoheme biosynthesis; protoheme from protoporphyrin-IX: step 1/1. Its function is as follows. Catalyzes the ferrous insertion into protoporphyrin IX. The polypeptide is Ferrochelatase (Azoarcus sp. (strain BH72)).